A 461-amino-acid chain; its full sequence is Protein-serine O-palmitoleoyltransferase porcupine (461 aa).

At 1–17 (MATFSRQEFFQQLLQGC) the chain is on the cytoplasmic side. Residues 18-38 (LLPTVQQGLDQIWLLLTICFA) form a helical membrane-spanning segment. Residues 39 to 66 (CRLLWRLGLPSYLKHASTVAGGFFSLYH) lie on the Extracellular side of the membrane. Residues 67 to 87 (FFQLHMVWVVLLSLLCYLVLF) traverse the membrane as a helical segment. Over 88-95 (LCRHSSHR) the chain is Cytoplasmic. The helical transmembrane segment at 96 to 116 (GVFLSVTILIYLLMGEMHMVD) threads the bilayer. Residues 117–152 (TVTWHKMRGAQMIVAMKAVSLGFDLDRGEVGAVPSP) are Extracellular-facing. A helical transmembrane segment spans residues 153–173 (VEFMGYLYFVGTIVFGPWISF). The Cytoplasmic segment spans residues 174-198 (HSYLQAVQGRPLSRRWLKKVARSLA). The helical transmembrane segment at 199–219 (LALLCLVLSTCVGPYLFPYFI) threads the bilayer. Residues 220–252 (PLDGDRLLRNKKRKARGTMVRWLRAYESAVSFH) are Extracellular-facing. Residues 253–273 (FSNYFVGFLSEATATLAGAGF) form a helical membrane-spanning segment. Residues 274-337 (TEEKDHLEWD…SAVLVTYAAS (64 aa)) lie on the Cytoplasmic side of the membrane. A helical membrane pass occupies residues 338–358 (ALLHGFSFHLAAVLLSLAFIT). The active site involves His-341. Residues 359-396 (YVEHVLRKRLAQILSACILSKRCLPDCSHRHRLGLGVR) lie on the Extracellular side of the membrane. Residues 397-417 (ALNLLFGALAIFHLSYLGSLF) form a helical membrane-spanning segment. The Cytoplasmic segment spans residues 418–461 (DVDVDDTTEEQGYGMAYTVHKWSELSWASHWVTFGCWIFYRLIG).

Belongs to the membrane-bound acyltransferase family. Porcupine subfamily. In terms of assembly, interacts with WNT1, WNT3, WNT3A, WNT4, WNT5A, WNT5B, WNT6, WNT7A and WNT7B. In terms of tissue distribution, expressed in brain, heart, kidney, liver, lung, muscle, spleen and testis. Isoform 4 is strongly expressed in kidney, liver, lung, spleen and testis. Isoform 1 is strongly expressed in brain, heart and muscle and poorly in kidney, liver, lung, spleen and testis.

Its subcellular location is the endoplasmic reticulum membrane. The enzyme catalyses [Wnt protein]-L-serine + (9Z)-hexadecenoyl-CoA = [Wnt protein]-O-(9Z)-hexadecenoyl-L-serine + CoA. In terms of biological role, protein-serine O-palmitoleoyltransferase that acts as a key regulator of the Wnt signaling pathway by mediating the attachment of palmitoleate, a 16-carbon monounsaturated fatty acid (C16:1(9Z)), to Wnt proteins. Serine palmitoleoylation of WNT proteins is required for efficient binding to frizzled receptors. This chain is Protein-serine O-palmitoleoyltransferase porcupine, found in Mus musculus (Mouse).